Here is a 258-residue protein sequence, read N- to C-terminus: MKDVQNQPDNRNIYLQRVGIRNLQYPVTVMDRNNGYQDTVATINMYVDLPVNFRGTHMSRFVEVLNRYRLGIDPKIIKNMLEELRNNLNASVARVEIEFPYFILKKAPVSSIESFLKYTCRIEGQKTEKLYEFTMSVGVPIMTLCPCSKEISERGAHNQRAMAWIHIKSKKMIWFEELIDAAEQAASSPVFTILKRVDEKFVTEHAYDNPRFVEDVAREIAVRLNRDERISWYRVEVESFESIHDHSAYACVMKDKED.

This sequence belongs to the GTP cyclohydrolase IV family.

It catalyses the reaction GTP + H2O = 7,8-dihydroneopterin 3'-triphosphate + formate + H(+). The protein operates within cofactor biosynthesis; 7,8-dihydroneopterin triphosphate biosynthesis; 7,8-dihydroneopterin triphosphate from GTP: step 1/1. In terms of biological role, converts GTP to 7,8-dihydroneopterin triphosphate. The protein is GTP cyclohydrolase FolE2 of Pseudothermotoga lettingae (strain ATCC BAA-301 / DSM 14385 / NBRC 107922 / TMO) (Thermotoga lettingae).